Here is a 274-residue protein sequence, read N- to C-terminus: MGKSLSHLPLHSSKEDAYDGVTSENMRNGLVNSEVHNEDGRNGDVSQFPYVEFTGRDSVTCPTCQGTGRIPRGQENQLVALIPYSDQRLRPRRTKLYVMASVFVCLLLSGLAVFFLFPRSIDVKYIGVKSAYVSYDVQKRTIYLNITNTLNITNNNYYSVEVENITAQVQFSKTVIGKARLNNITIIGPLDMKQIDYTVPTVIAEEMSYMYDFCTLISIKVHNIVLMMQVTVTTTYFGHSEQISQERYQYVDCGRNTTYQLGQSEYLNVLQPQQ.

A compositionally biased stretch (low complexity) spans 1–11 (MGKSLSHLPLH). A disordered region spans residues 1–20 (MGKSLSHLPLHSSKEDAYDG). The N-myristoyl glycine moiety is linked to residue Gly2. Residues 2–96 (GKSLSHLPLH…QRLRPRRTKL (95 aa)) are Cytoplasmic-facing. At Ser33 the chain carries Phosphoserine. The chain crosses the membrane as a helical span at residues 97–117 (YVMASVFVCLLLSGLAVFFLF). At 118 to 274 (PRSIDVKYIG…EYLNVLQPQQ (157 aa)) the chain is on the lumenal side. Residues Asn145, Asn151, Asn164, and Asn183 are each glycosylated (N-linked (GlcNAc...) asparagine). An intrachain disulfide couples Cys214 to Cys253. A glycan (N-linked (GlcNAc...) asparagine) is linked at Asn256.

It belongs to the TMEM106 family. In terms of assembly, can form homomers. Interacts (via N-terminus) with MAP6 (via C-terminus). Interacts (via C-terminus) with the vacuolar-type ATPase subunit ATP6AP1. Interacts (via N-terminus) with AP2M1 and CLTC. Interacts with TMEM106C. As to quaternary structure, (Microbial infection) Interacts with SARS coronavirus-2/SARS-CoV-2 spike protein (via RBD domain). Expressed in the brain, including in the frontal cortex (at protein level). Expressed in lung epithelial cells.

Its subcellular location is the late endosome membrane. It localises to the lysosome membrane. It is found in the cell membrane. Its function is as follows. In neurons, involved in the transport of late endosomes/lysosomes. May be involved in dendrite morphogenesis and maintenance by regulating lysosomal trafficking. May act as a molecular brake for retrograde transport of late endosomes/lysosomes, possibly via its interaction with MAP6. In motoneurons, may mediate the axonal transport of lysosomes and axonal sorting at the initial segment. It remains unclear whether TMEM106B affects the transport of moving lysosomes in the anterograde or retrograde direction in neurites and whether it is important in the sorting of lysosomes in axons or in dendrites. In neurons, may also play a role in the regulation of lysosomal size and responsiveness to stress. Required for proper lysosomal acidification. Functionally, (Microbial infection) Plays a role in human coronavirus SARS-CoV-2 infection, but not in common cold coronaviruses HCoV-229E and HCoV-OC43 infections. Involved in ACE2-independent SARS-CoV-2 cell entry. Required for post-endocytic stage of virus entry, facilitates spike-mediated membrane fusion. Virus attachment and endocytosis can also be mediated by other cell surface receptors. This is Transmembrane protein 106B from Homo sapiens (Human).